A 385-amino-acid chain; its full sequence is Lipoyl synthase, mitochondrial (385 aa).

7 residues coordinate [4Fe-4S] cluster: cysteine 107, cysteine 112, cysteine 118, cysteine 137, cysteine 141, cysteine 144, and serine 352. In terms of domain architecture, Radical SAM core spans lysine 122 to leucine 341.

The protein belongs to the radical SAM superfamily. Lipoyl synthase family. It depends on [4Fe-4S] cluster as a cofactor.

The protein localises to the mitochondrion. It catalyses the reaction [[Fe-S] cluster scaffold protein carrying a second [4Fe-4S](2+) cluster] + N(6)-octanoyl-L-lysyl-[protein] + 2 oxidized [2Fe-2S]-[ferredoxin] + 2 S-adenosyl-L-methionine + 4 H(+) = [[Fe-S] cluster scaffold protein] + N(6)-[(R)-dihydrolipoyl]-L-lysyl-[protein] + 4 Fe(3+) + 2 hydrogen sulfide + 2 5'-deoxyadenosine + 2 L-methionine + 2 reduced [2Fe-2S]-[ferredoxin]. It functions in the pathway protein modification; protein lipoylation via endogenous pathway; protein N(6)-(lipoyl)lysine from octanoyl-[acyl-carrier-protein]: step 2/2. Functionally, catalyzes the radical-mediated insertion of two sulfur atoms into the C-6 and C-8 positions of the octanoyl moiety bound to the lipoyl domains of lipoate-dependent enzymes, thereby converting the octanoylated domains into lipoylated derivatives. The polypeptide is Lipoyl synthase, mitochondrial (Meyerozyma guilliermondii (strain ATCC 6260 / CBS 566 / DSM 6381 / JCM 1539 / NBRC 10279 / NRRL Y-324) (Yeast)).